The primary structure comprises 254 residues: Type III pantothenate kinase (254 aa).

13-20 (MIGNTRQH) lines the ATP pocket. Substrate is bound by residues Y84 and 88-91 (GLDR). D90 functions as the Proton acceptor in the catalytic mechanism. K(+) is bound at residue D110. T113 lines the ATP pocket. T166 lines the substrate pocket.

Belongs to the type III pantothenate kinase family. As to quaternary structure, homodimer. NH4(+) serves as cofactor. It depends on K(+) as a cofactor.

The protein localises to the cytoplasm. It carries out the reaction (R)-pantothenate + ATP = (R)-4'-phosphopantothenate + ADP + H(+). It functions in the pathway cofactor biosynthesis; coenzyme A biosynthesis; CoA from (R)-pantothenate: step 1/5. Catalyzes the phosphorylation of pantothenate (Pan), the first step in CoA biosynthesis. The chain is Type III pantothenate kinase from Thermosynechococcus vestitus (strain NIES-2133 / IAM M-273 / BP-1).